Consider the following 237-residue polypeptide: Nodulation protein NolA (237 aa).

Positions 10–79 constitute an HTH merR-type domain; the sequence is RWRIGELAEA…LVEIRKAMEG (70 aa). The H-T-H motif DNA-binding region spans 13–32; it reads IGELAEATGVTVRTLHHYEH.

Involved in genotype-specific nodulation of soybeans. The polypeptide is Nodulation protein NolA (nolA) (Bradyrhizobium diazoefficiens (strain JCM 10833 / BCRC 13528 / IAM 13628 / NBRC 14792 / USDA 110)).